A 420-amino-acid chain; its full sequence is UDP-N-acetyl-D-mannosamine dehydrogenase (420 aa).

NAD(+)-binding residues include Tyr-13, Ile-14, Asp-33, Thr-85, and Thr-126. 8 residues coordinate UDP-N-acetyl-alpha-D-mannosaminouronate: Arg-160, Val-161, Lys-212, Asn-216, Arg-219, His-250, Arg-252, and Gly-263. Lys-212 acts as the Proton donor/acceptor in catalysis. Catalysis depends on Cys-266, which acts as the Nucleophile. UDP-N-acetyl-alpha-D-mannosaminouronate-binding residues include Phe-330 and Lys-331. NAD(+) is bound at residue Arg-338. Position 416 (Lys-416) interacts with UDP-N-acetyl-alpha-D-mannosaminouronate.

The protein belongs to the UDP-glucose/GDP-mannose dehydrogenase family. WecC subfamily. Homodimer.

It catalyses the reaction UDP-N-acetyl-alpha-D-mannosamine + 2 NAD(+) + H2O = UDP-N-acetyl-alpha-D-mannosaminouronate + 2 NADH + 3 H(+). It participates in bacterial outer membrane biogenesis; enterobacterial common antigen biosynthesis. Functionally, catalyzes the four-electron oxidation of UDP-N-acetyl-D-mannosamine (UDP-ManNAc), reducing NAD(+) and releasing UDP-N-acetylmannosaminuronic acid (UDP-ManNAcA). In Yersinia pestis, this protein is UDP-N-acetyl-D-mannosamine dehydrogenase.